Here is a 136-residue protein sequence, read N- to C-terminus: Histone H3.1/H3.2 (136 aa).

The segment at 1-42 is disordered; that stretch reads MARTKQTARKSTGGKAPRKQLASKAARKAAPATGGVKKPHRY. Lysine 5 is modified (N6,N6,N6-trimethyllysine; alternate). An N6,N6-dimethyllysine; alternate modification is found at lysine 5. An N6-methyllysine; alternate mark is found at lysine 5 and lysine 10. Lysine 10 carries the post-translational modification N6-acetyllysine; alternate. Serine 11 bears the Phosphoserine mark. Lysine 15 bears the N6,N6-dimethyllysine; alternate mark. Lysine 15, lysine 19, lysine 24, lysine 28, and lysine 37 each carry N6-acetyllysine; alternate. N6-methyllysine; alternate occurs at positions 19, 24, 28, and 37. The span at 19-32 shows a compositional bias: low complexity; sequence KQLASKAARKAAPA. An N6,N6,N6-trimethyllysine; alternate mark is found at lysine 28 and lysine 37. Residues lysine 28 and lysine 37 each carry the N6,N6-dimethyllysine; alternate modification. N6-acetyllysine is present on residues lysine 57 and lysine 65. Lysine 80 is subject to N6,N6,N6-trimethyllysine; alternate. Lysine 80 bears the N6,N6-dimethyllysine; alternate mark. N6-methyllysine; alternate is present on lysine 80.

The protein belongs to the histone H3 family. As to quaternary structure, the nucleosome is a histone octamer containing two molecules each of H2A, H2B, H3 and H4 assembled in one H3-H4 heterotetramer and two H2A-H2B heterodimers. The octamer wraps approximately 147 bp of DNA. Phosphorylated by ark1 to form H3S10ph in a cell cycle-dependent manner during mitosis and meiosis. H3S10ph is also formed by ssp2, promotes subsequent H3K14ac formation by gcn5, and is required for transcriptional activation through TBP recruitment to the promoters. Dephosphorylation is performed by sds21. Post-translationally, mono-, di- and trimethylated by the COMPASS complex to form H3K4me1/2/3. H3K4me activates gene expression by regulating transcription elongation and plays a role in telomere length maintenance. H3K4me enrichment correlates with transcription levels, and occurs in a 5' to 3' gradient with H3K4me3 enrichment at the 5'-end of genes, shifting to H3K4me2 and then H3K4me1. Methylated by clr4 to form H3K9me1. H3K9me1 represents a specific tag for epigenetic transcriptional repression by recruiting swi6/HP1 to methylated histones. Targeting to histone probably involves clr3 and rik1. Essential for silencing of centromeres and directional switching of the mating type. Methylated by set2 to form H3K36me. H3K36me represses gene expression. Methylated by dot1 to form H3K79me. H3K79me is required for association of SIR proteins with telomeric regions and for telomeric silencing. The COMPASS-mediated formation of H3K4me2/3 and the dot1-mediated formation of H3K79me require H2BK123ub1. In terms of processing, acetylation of histone H3 leads to transcriptional activation. H3K14ac formation by gcn5 is promoted by H3S10ph. H3K14ac can also be formed by esa1. H3K56ac formation occurs predominantly in newly synthesized H3 molecules during G1, S and G2/M of the cell cycle and may be involved in DNA repair.

It localises to the nucleus. It is found in the chromosome. Its function is as follows. Core component of nucleosome. Nucleosomes wrap and compact DNA into chromatin, limiting DNA accessibility to the cellular machineries which require DNA as a template. Histones thereby play a central role in transcription regulation, DNA repair, DNA replication and chromosomal stability. DNA accessibility is regulated via a complex set of post-translational modifications of histones, also called histone code, and nucleosome remodeling. This Schizosaccharomyces pombe (strain 972 / ATCC 24843) (Fission yeast) protein is Histone H3.1/H3.2 (hht1).